The primary structure comprises 132 residues: Agouti-signaling protein (132 aa).

The signal sequence occupies residues 1–22 (MDVTRLLLATLLVFLCFFTAYS). Asparagine 39 carries N-linked (GlcNAc...) asparagine glycosylation. The tract at residues 62-88 (ISRKEAEKKRSSKKEASMKKVARPRTP) is disordered. Positions 63-79 (SRKEAEKKRSSKKEASM) are enriched in basic and acidic residues. Intrachain disulfides connect cysteine 93–cysteine 108, cysteine 100–cysteine 114, cysteine 107–cysteine 125, cysteine 111–cysteine 132, and cysteine 116–cysteine 123. An Agouti domain is found at 93–132 (CVATRDSCKPPAPACCDPCASCQCRFFRSACSCRVLSLNC).

The protein localises to the secreted. Functionally, involved in the regulation of melanogenesis. The binding of ASP to MC1R precludes alpha-MSH initiated signaling and thus blocks production of cAMP, leading to a down-regulation of eumelanogenesis (brown/black pigment) and thus increasing synthesis of pheomelanin (yellow/red pigment). The protein is Agouti-signaling protein (ASIP) of Chlorocebus aethiops (Green monkey).